The primary structure comprises 97 residues: Large ribosomal subunit protein eL30 (97 aa).

The protein belongs to the eukaryotic ribosomal protein eL30 family.

In Methanoregula boonei (strain DSM 21154 / JCM 14090 / 6A8), this protein is Large ribosomal subunit protein eL30.